A 381-amino-acid chain; its full sequence is E3 ubiquitin-protein ligase KCMF1 (381 aa).

Serine 2 is modified (N-acetylserine). Serine 2 is modified (phosphoserine). Residues 4–60 (HEGVSCDACLKGNFRGRRYKCLICYDYDLCASCYESGATTTRHTTDHPMQCILTRVD) form a ZZ-type zinc finger. 8 residues coordinate Zn(2+): cysteine 9, cysteine 12, cysteine 24, cysteine 27, cysteine 33, cysteine 36, histidine 46, and histidine 50. The C2H2-type zinc finger occupies 78–101 (FTCPYCGKMGYTETSLQEHVTSEH). The segment at 154-194 (MFHPGRGLGGPRARRSNMHFTSSSTGGLSSSQSSYSPSSRE) is disordered. Residues serine 169, serine 189, and serine 212 each carry the phosphoserine modification. Low complexity predominate over residues 175–192 (SSSTGGLSSSQSSYSPSS). A coiled-coil region spans residues 224–259 (ASQLQQLQMQLQLERQHAQAARQQLETARNASRRTN). Residues serine 335 and serine 336 each carry the phosphoserine modification.

It belongs to the KCMF1 family. As to quaternary structure, component of the SIFI complex, composed of KCMF1, UBR4 and calmodulin (CALM1, CALM2 or CALM3). As to expression, testis, liver, kidney, heart and skeletal muscle.

The protein localises to the cytoplasm. Its subcellular location is the late endosome. It is found in the lysosome. It catalyses the reaction S-ubiquitinyl-[E2 ubiquitin-conjugating enzyme]-L-cysteine + [acceptor protein]-L-lysine = [E2 ubiquitin-conjugating enzyme]-L-cysteine + N(6)-ubiquitinyl-[acceptor protein]-L-lysine.. It functions in the pathway protein modification; protein ubiquitination. Functionally, E3 ubiquitin-protein ligase which accepts ubiquitin from an E2 ubiquitin-conjugating enzyme and then transfers it to targeted substrates, promoting their degradation by the proteasome. Together with UBR4, component of the N-end rule pathway: ubiquitinates proteins bearing specific N-terminal residues that are destabilizing according to the N-end rule, leading to their degradation. Does not ubiquitinate proteins that are acetylated at the N-terminus. Together with UBR4, part of a protein quality control pathway that catalyzes ubiquitination and degradation of proteins that have been oxidized in response to reactive oxygen species (ROS): recognizes proteins with an Arg-CysO3(H) degron at the N-terminus, and mediates assembly of heterotypic 'Lys-63'-/'Lys-27'-linked branched ubiquitin chains on oxidized proteins, leading to their degradation by autophagy. Catalytic component of the SIFI complex, a multiprotein complex required to inhibit the mitochondrial stress response after a specific stress event has been resolved: ubiquitinates and degrades (1) components of the HRI-mediated signaling of the integrated stress response, such as DELE1 and EIF2AK1/HRI, as well as (2) unimported mitochondrial precursors. Within the SIFI complex, UBR4 initiates ubiquitin chain that are further elongated or branched by KCMF1. The polypeptide is E3 ubiquitin-protein ligase KCMF1 (Mus musculus (Mouse)).